The following is a 495-amino-acid chain: DDB1- and CUL4-associated factor 4 (495 aa).

The segment covering 1-17 has biased composition (basic residues); it reads MNKSRWQSRRRHGRRSH. The tract at residues 1 to 66 is disordered; the sequence is MNKSRWQSRR…TAGTSSVPEL (66 aa). Over residues 24-34 the composition is skewed to basic and acidic residues; sequence RLRDSEDRSDS. A compositionally biased stretch (low complexity) spans 51–62; sequence PSTSSGTAGTSS. WD repeat units follow at residues 368-407 and 410-451; these read FHDS…CVRQ and GHVN…LLRT.

Interacts with DDB1 and CUL4A.

Its pathway is protein modification; protein ubiquitination. In terms of biological role, may function as a substrate receptor for CUL4-DDB1 E3 ubiquitin-protein ligase complex. This is DDB1- and CUL4-associated factor 4 (DCAF4) from Homo sapiens (Human).